A 552-amino-acid polypeptide reads, in one-letter code: FERRY endosomal RAB5 effector complex subunit 3 (552 aa).

Ser-79 carries the phosphoserine modification.

In terms of assembly, component of the FERRY complex composed of five subunits, TBCK, PPP1R21, FERRY3, CRYZL1 and GATD1 with a ratio of 1:2:1:2:4, respectively.

Its subcellular location is the cytoplasm. The protein localises to the early endosome. Its function is as follows. Component of the FERRY complex (Five-subunit Endosomal Rab5 and RNA/ribosome intermediary). The FERRY complex directly interacts with mRNAs and RAB5A, and functions as a RAB5A effector involved in the localization and the distribution of specific mRNAs most likely by mediating their endosomal transport. The complex recruits mRNAs and ribosomes to early endosomes through direct mRNA-interaction. Plays a role in mast cell degranulation. This chain is FERRY endosomal RAB5 effector complex subunit 3, found in Mus musculus (Mouse).